Consider the following 599-residue polypeptide: Sulfite reductase [NADPH] flavoprotein alpha-component (599 aa).

Residues 64–202 form the Flavodoxin-like domain; that stretch reads VTLISASQTG…AASEWRACVV (139 aa). Residues 70–75, 117–120, and 153–162 each bind FMN; these read SQTGNA, STQG, and LGDTSYEFFC. Residues 234–448 enclose the FAD-binding FR-type domain; the sequence is DAPLTATLSV…IEHNDNFRLP (215 aa). FAD-binding positions include Thr322, Ala356, 386–389, 404–406, Tyr410, and 419–422; these read RLYS, TVG, and GGAS. NADP(+)-binding positions include 519 to 520, 525 to 529, and Asp561; these read SR and KIYVQ. Position 599 (Tyr599) interacts with FAD.

It belongs to the NADPH-dependent sulphite reductase flavoprotein subunit CysJ family. In the N-terminal section; belongs to the flavodoxin family. The protein in the C-terminal section; belongs to the flavoprotein pyridine nucleotide cytochrome reductase family. Alpha(8)-beta(8). The alpha component is a flavoprotein, the beta component is a hemoprotein. The cofactor is FAD. FMN is required as a cofactor.

The catalysed reaction is hydrogen sulfide + 3 NADP(+) + 3 H2O = sulfite + 3 NADPH + 4 H(+). The protein operates within sulfur metabolism; hydrogen sulfide biosynthesis; hydrogen sulfide from sulfite (NADPH route): step 1/1. In terms of biological role, component of the sulfite reductase complex that catalyzes the 6-electron reduction of sulfite to sulfide. This is one of several activities required for the biosynthesis of L-cysteine from sulfate. The flavoprotein component catalyzes the electron flow from NADPH -&gt; FAD -&gt; FMN to the hemoprotein component. The sequence is that of Sulfite reductase [NADPH] flavoprotein alpha-component from Salmonella typhi.